A 485-amino-acid chain; its full sequence is Cysteine--tRNA ligase (485 aa).

Zn(2+) is bound at residue Cys-27. The 'HIGH' region motif lies at Ile-29–His-39. Cys-208, His-233, and Glu-237 together coordinate Zn(2+). The short motif at Lys-265–Ser-269 is the 'KMSKS' region element. Lys-268 lines the ATP pocket.

This sequence belongs to the class-I aminoacyl-tRNA synthetase family. In terms of assembly, monomer. Zn(2+) serves as cofactor.

The protein localises to the cytoplasm. The catalysed reaction is tRNA(Cys) + L-cysteine + ATP = L-cysteinyl-tRNA(Cys) + AMP + diphosphate. In Nitratidesulfovibrio vulgaris (strain DSM 19637 / Miyazaki F) (Desulfovibrio vulgaris), this protein is Cysteine--tRNA ligase.